Reading from the N-terminus, the 207-residue chain is Low-molecular weight cobalt-containing nitrile hydratase subunit alpha (207 aa).

Positions 109, 112, 113, and 114 each coordinate Co(3+).

It belongs to the nitrile hydratase subunit alpha family. Heterodimer of an alpha and a beta chain. It depends on Co(3+) as a cofactor.

The catalysed reaction is an aliphatic primary amide = an aliphatic nitrile + H2O. Functionally, NHase catalyzes the hydration of various nitrile compounds to the corresponding amides. This is Low-molecular weight cobalt-containing nitrile hydratase subunit alpha from Rhodococcus rhodochrous.